Reading from the N-terminus, the 181-residue chain is Ribosome maturation factor RimM (181 aa).

Positions 103-181 constitute a PRC barrel domain; sequence EGDYYWSQLE…EMVVDWDPEF (79 aa).

It belongs to the RimM family. As to quaternary structure, binds ribosomal protein uS19.

The protein resides in the cytoplasm. An accessory protein needed during the final step in the assembly of 30S ribosomal subunit, possibly for assembly of the head region. Essential for efficient processing of 16S rRNA. May be needed both before and after RbfA during the maturation of 16S rRNA. It has affinity for free ribosomal 30S subunits but not for 70S ribosomes. The chain is Ribosome maturation factor RimM from Marinomonas sp. (strain MWYL1).